Consider the following 774-residue polypeptide: Alpha,alpha-trehalose phosphorylase (774 aa).

369–370 lines the substrate pocket; sequence WD. Glu-498 serves as the catalytic Proton donor. Substrate is bound at residue 610–611; that stretch reads KQ.

It belongs to the glycosyl hydrolase 65 family. In terms of assembly, homodimer.

The catalysed reaction is alpha,alpha-trehalose + phosphate = beta-D-glucose 1-phosphate + D-glucose. The protein operates within glycan degradation; trehalose degradation. With respect to regulation, inhibited by Cu(2+), Hg(2+), Mg(2+), Mn(2+), Pb(2+) and Zn(2+). Catalyzes the reversible phosphorolytic cleavage of trehalose. Phosphorolysis is specific for trehalose, but D-xylose, D-galactose, L-arabinose, D-fucose, L-fucose, D-glucosamine and 2-deoxy D-glucose can act as substitutes for D-glucose in the synthetic reaction. The polypeptide is Alpha,alpha-trehalose phosphorylase (treP) (Thermoanaerobacter brockii (Thermoanaerobium brockii)).